The chain runs to 667 residues: MEILESIDFIEVLILDNLGAIIIVAVIVGTYLYMNKPPPPPPVFNKPNNKINKEAQKPKKTITKNEDGKKVMKIFFGTQTRTAEDFSRIIEKECKKIGIPCEVVDLESYEHEQELHSESFVMFLVATHGEGDPTDNAKEFYLWLTNDERPTDLLNGVPFTVFGLGNKTYEHYNAVARVIDRRMEELGGKRVFERGEGDDDATLEEDFNRWKKDMWPVVCKFLGYELKSTEDDKFVPRFRMVTLNQDSKDINDPFIKIVSTPLKPKLSTDNKVIYDMKNPYYAEVLENRELHSNESDRSCRHIEFKLGDEVSYTTGDHLGVFPINDSKLVEQLIKRLGVNGDDMIALVPIDQEGSVIKASFGPMTIRRAFSEHLDITNPVRKSVLRALAESTTNEEEKKRLLYLATEEANEEYNKYIKNDFRGVVDLLESFPGLQPLIAHFLEFTPRLPARMYSISSSPHNKNGVVSITSVVVNFTTGNQRAHNGVASTWLSHLKVGDKVPLFVRESHFKLPSAATEQKPVIMVGPGTGLAPFRGFLQELQHRNHSQQQQSLLFFGCRSDTVDYIYREELEQYHQSSVLGDLVVAFSRKTSQKVYVQNKLLEHKEKVWELLNKGAYFYVCGDGRNMSKAVQQALLSIIKEFGSKDDNSAQQFIDDMSSHGRYLQDVWF.

Residues 1 to 8 (MEILESID) lie on the Lumenal side of the membrane. The chain crosses the membrane as a helical span at residues 9–29 (FIEVLILDNLGAIIIVAVIVG). At 30 to 667 (TYLYMNKPPP…HGRYLQDVWF (638 aa)) the chain is on the cytoplasmic side. One can recognise a Flavodoxin-like domain in the interval 72–215 (MKIFFGTQTR…DFNRWKKDMW (144 aa)). FMN is bound by residues 164 to 173 (LGNKTYEHYN) and Asp199. The FAD-binding FR-type domain occupies 277 to 511 (KNPYYAEVLE…FVRESHFKLP (235 aa)). Residue Arg297 participates in NADP(+) binding. FAD-binding positions include 468–470 (TSV) and 484–487 (GVAS). Residues Thr527, 586–587 (SR), and 592–596 (KVYVQ) contribute to the NADP(+) site. Trp666 is an FAD binding site.

The protein belongs to the NADPH--cytochrome P450 reductase family. This sequence in the N-terminal section; belongs to the flavodoxin family. In the C-terminal section; belongs to the flavoprotein pyridine nucleotide cytochrome reductase family. Requires FAD as cofactor. The cofactor is FMN.

It localises to the endoplasmic reticulum membrane. It catalyses the reaction 2 oxidized [cytochrome P450] + NADPH = 2 reduced [cytochrome P450] + NADP(+) + H(+). In terms of biological role, this enzyme is required for electron transfer from NADP to cytochrome P450 in microsomes. It can also provide electron transfer to heme oxygenase and cytochrome B5. This is NADPH--cytochrome P450 reductase (redB) from Dictyostelium discoideum (Social amoeba).